Consider the following 259-residue polypeptide: Dolichol-phosphate mannosyltransferase subunit 1 (259 aa).

The residue at position 2 (alanine 2) is an N-acetylalanine. Serine 3 is modified (phosphoserine). Residues proline 31, tyrosine 33, glutamate 35, isoleucine 62, aspartate 64, aspartate 117, alanine 118, aspartate 119, arginine 146, arginine 233, and lysine 239 each contribute to the GDP-alpha-D-mannose site. Aspartate 119 contributes to the Mg(2+) binding site. Residue aspartate 119 coordinates Mn(2+).

It belongs to the glycosyltransferase 2 family. In terms of assembly, component of the dolichol-phosphate mannose (DPM) synthase complex composed of DPM1, DPM2 and DPM3; within the complex, directly interacts with DPM3. This interaction may stabilize DPM1. Requires Mg(2+) as cofactor. The cofactor is Mn(2+). It depends on Ca(2+) as a cofactor.

Its subcellular location is the endoplasmic reticulum. It catalyses the reaction a di-trans,poly-cis-dolichyl phosphate + GDP-alpha-D-mannose = a di-trans,poly-cis-dolichyl beta-D-mannosyl phosphate + GDP. It participates in protein modification; protein glycosylation. Functionally, transfers mannose from GDP-mannose to dolichol monophosphate to form dolichol phosphate mannose (Dol-P-Man) which is the mannosyl donor in pathways leading to N-glycosylation, glycosyl phosphatidylinositol membrane anchoring, and O-mannosylation of proteins; catalytic subunit of the dolichol-phosphate mannose (DPM) synthase complex. In Sus scrofa (Pig), this protein is Dolichol-phosphate mannosyltransferase subunit 1 (DPM1).